The chain runs to 190 residues: Peptidyl-tRNA hydrolase (190 aa).

Phe14 lines the tRNA pocket. Residue His19 is the Proton acceptor of the active site. Positions 64, 66, and 112 each coordinate tRNA.

This sequence belongs to the PTH family. In terms of assembly, monomer.

Its subcellular location is the cytoplasm. It carries out the reaction an N-acyl-L-alpha-aminoacyl-tRNA + H2O = an N-acyl-L-amino acid + a tRNA + H(+). In terms of biological role, hydrolyzes ribosome-free peptidyl-tRNAs (with 1 or more amino acids incorporated), which drop off the ribosome during protein synthesis, or as a result of ribosome stalling. Functionally, catalyzes the release of premature peptidyl moieties from peptidyl-tRNA molecules trapped in stalled 50S ribosomal subunits, and thus maintains levels of free tRNAs and 50S ribosomes. This Staphylococcus aureus (strain Mu3 / ATCC 700698) protein is Peptidyl-tRNA hydrolase.